The sequence spans 760 residues: uncharacterized protein (760 aa).

The first 23 residues, 1–23, serve as a signal peptide directing secretion; sequence MVIKKGFFALSSCTLGLGLILTA. Residue Cys24 is the site of N-palmitoyl cysteine attachment. Cys24 is lipidated: S-diacylglycerol cysteine. Disordered stretches follow at residues 220 to 262 and 443 to 482; these read ANGK…NSDN and YEIKAPTNSQNGNGTLLGSFTKSKSNGKEQSGQDEDNQTS. Composition is skewed to polar residues over residues 222–257 and 448–472; these read GKTTSTQTSPQPKNAVSSLQLKQAAEGTSTDNSQDA and PTNSQNGNGTLLGSFTKSKSNGKEQ.

This sequence belongs to the MG185/MG260 family.

Its subcellular location is the cell membrane. This is an uncharacterized protein from Mycoplasma pneumoniae (strain ATCC 29342 / M129 / Subtype 1) (Mycoplasmoides pneumoniae).